The chain runs to 60 residues: Large ribosomal subunit protein uL30 (60 aa).

The protein belongs to the universal ribosomal protein uL30 family. In terms of assembly, part of the 50S ribosomal subunit.

The chain is Large ribosomal subunit protein uL30 from Streptococcus gordonii (strain Challis / ATCC 35105 / BCRC 15272 / CH1 / DL1 / V288).